We begin with the raw amino-acid sequence, 304 residues long: UDP-3-O-acyl-N-acetylglucosamine deacetylase (304 aa).

Zn(2+)-binding residues include His-78, His-237, and Asp-241. Catalysis depends on His-264, which acts as the Proton donor.

The protein belongs to the LpxC family. Requires Zn(2+) as cofactor.

The catalysed reaction is a UDP-3-O-[(3R)-3-hydroxyacyl]-N-acetyl-alpha-D-glucosamine + H2O = a UDP-3-O-[(3R)-3-hydroxyacyl]-alpha-D-glucosamine + acetate. Its pathway is glycolipid biosynthesis; lipid IV(A) biosynthesis; lipid IV(A) from (3R)-3-hydroxytetradecanoyl-[acyl-carrier-protein] and UDP-N-acetyl-alpha-D-glucosamine: step 2/6. In terms of biological role, catalyzes the hydrolysis of UDP-3-O-myristoyl-N-acetylglucosamine to form UDP-3-O-myristoylglucosamine and acetate, the committed step in lipid A biosynthesis. This chain is UDP-3-O-acyl-N-acetylglucosamine deacetylase, found in Alcanivorax borkumensis (strain ATCC 700651 / DSM 11573 / NCIMB 13689 / SK2).